Here is a 1313-residue protein sequence, read N- to C-terminus: Inter-alpha-trypsin inhibitor heavy chain H6 (1313 aa).

Residues 1 to 23 form the signal peptide; that stretch reads MSGWRYLICVSFLLTILLELTYQ. The 127-residue stretch at 24–150 folds into the VIT domain; the sequence is GPPVPASSST…EVTFSLAYEE (127 aa). N-linked (GlcNAc...) asparagine glycans are attached at residues N83, N374, N540, and N594. The VWFA domain maps to 283–469; sequence NVVFVIDVSS…LQLKGLYEEI (187 aa). Disordered stretches follow at residues 612 to 644, 783 to 817, 856 to 928, and 959 to 983; these read QPKQASEETRRQTSTSAGPDTIMPSSSSRHGLG, HSKPGAPSHPQLGALTSQAPKGLPQSRPGVSTLQV, LKPS…EPLP, and PSRPGVPTMSLLNSSRPTPEGSPPN. The span at 623–640 shows a compositional bias: polar residues; sequence QTSTSAGPDTIMPSSSSR. The segment covering 864–875 has biased composition (polar residues); the sequence is QISTSISLSKPE. Residues 876 to 888 are compositionally biased toward pro residues; that stretch reads TPNPHMPQTPLPP. The span at 907–921 shows a compositional bias: low complexity; it reads TISSSTGPSSTTTTS. N-linked (GlcNAc...) asparagine glycosylation is found at N971 and N1231.

The protein belongs to the ITIH family.

The protein localises to the secreted. This is Inter-alpha-trypsin inhibitor heavy chain H6 (ITIH6) from Homo sapiens (Human).